A 325-amino-acid chain; its full sequence is Ribosomal RNA small subunit methyltransferase H (325 aa).

S-adenosyl-L-methionine contacts are provided by residues 45 to 47 (GGH), aspartate 65, tyrosine 92, aspartate 113, and glutamine 120.

The protein belongs to the methyltransferase superfamily. RsmH family.

Its subcellular location is the cytoplasm. The enzyme catalyses cytidine(1402) in 16S rRNA + S-adenosyl-L-methionine = N(4)-methylcytidine(1402) in 16S rRNA + S-adenosyl-L-homocysteine + H(+). Its function is as follows. Specifically methylates the N4 position of cytidine in position 1402 (C1402) of 16S rRNA. The protein is Ribosomal RNA small subunit methyltransferase H of Oleidesulfovibrio alaskensis (strain ATCC BAA-1058 / DSM 17464 / G20) (Desulfovibrio alaskensis).